The chain runs to 201 residues: Large ribosomal subunit protein uL4 (201 aa).

The segment at 45–71 (AQKTRAEVTGSGKKPWRQKGTGRARAG) is disordered.

Belongs to the universal ribosomal protein uL4 family. In terms of assembly, part of the 50S ribosomal subunit.

Functionally, one of the primary rRNA binding proteins, this protein initially binds near the 5'-end of the 23S rRNA. It is important during the early stages of 50S assembly. It makes multiple contacts with different domains of the 23S rRNA in the assembled 50S subunit and ribosome. Forms part of the polypeptide exit tunnel. This is Large ribosomal subunit protein uL4 from Shewanella sp. (strain MR-4).